Reading from the N-terminus, the 184-residue chain is Protein GrpE (184 aa).

Residues 1–32 are disordered; it reads MEEQKQTPSTPTPDTAAEAAVNAATAAPETAG. Residues 12-32 show a composition bias toward low complexity; it reads TPDTAAEAAVNAATAAPETAG.

The protein belongs to the GrpE family. Homodimer.

The protein localises to the cytoplasm. Functionally, participates actively in the response to hyperosmotic and heat shock by preventing the aggregation of stress-denatured proteins, in association with DnaK and GrpE. It is the nucleotide exchange factor for DnaK and may function as a thermosensor. Unfolded proteins bind initially to DnaJ; upon interaction with the DnaJ-bound protein, DnaK hydrolyzes its bound ATP, resulting in the formation of a stable complex. GrpE releases ADP from DnaK; ATP binding to DnaK triggers the release of the substrate protein, thus completing the reaction cycle. Several rounds of ATP-dependent interactions between DnaJ, DnaK and GrpE are required for fully efficient folding. The polypeptide is Protein GrpE (Cupriavidus pinatubonensis (strain JMP 134 / LMG 1197) (Cupriavidus necator (strain JMP 134))).